The primary structure comprises 257 residues: Pyridoxal phosphate homeostasis protein (257 aa).

At serine 2 the chain carries N-acetylserine. Lysine 49 is subject to N6-(pyridoxal phosphate)lysine.

It belongs to the pyridoxal phosphate-binding protein YggS/PROSC family.

Its subcellular location is the cytoplasm. The protein resides in the nucleus. Pyridoxal 5'-phosphate (PLP)-binding protein, which may be involved in intracellular homeostatic regulation of pyridoxal 5'-phosphate (PLP), the active form of vitamin B6. In Saccharomyces cerevisiae (strain ATCC 204508 / S288c) (Baker's yeast), this protein is Pyridoxal phosphate homeostasis protein.